The primary structure comprises 411 residues: Lissencephaly-1 homolog (411 aa).

The 33-residue stretch at 9-41 (QREELNQAIADYLGTNGYADSLEAFRKEADLST) folds into the LisH domain. The stretch at 56 to 83 (TSVIRLQKKVMELEAKLTEAEKEVIEGA) forms a coiled coil. WD repeat units lie at residues 106–147 (GHRA…RTLK), 148–187 (GHTD…ECVK), 191–230 (GHDH…CVKT), 233–272 (GHRE…CKVE), 275–334 (DHEH…CLLT), 337–376 (GHDN…CMKT), and 379–411 (AHQH…WECR).

It belongs to the WD repeat LIS1/nudF family.

It is found in the cytoplasm. It localises to the cytoskeleton. The protein localises to the microtubule organizing center. Its subcellular location is the centrosome. Functionally, positively regulates the activity of the minus-end directed microtubule motor protein dynein. May enhance dynein-mediated microtubule sliding by targeting dynein to the microtubule plus end. Required for several dynein- and microtubule-dependent processes. In Drosophila grimshawi (Hawaiian fruit fly), this protein is Lissencephaly-1 homolog.